The sequence spans 71 residues: Long neurotoxin 2 (71 aa).

5 disulfide bridges follow: C3/C20, C14/C41, C26/C30, C45/C56, and C57/C62.

This sequence belongs to the three-finger toxin family. Long-chain subfamily. Type II alpha-neurotoxin sub-subfamily. Expressed by the venom gland.

Its subcellular location is the secreted. Binds with high affinity to muscular (alpha-1/CHRNA1) and neuronal (alpha-7/CHRNA7) nicotinic acetylcholine receptor (nAChR) and inhibits acetylcholine from binding to the receptor, thereby impairing neuromuscular and neuronal transmission. This is Long neurotoxin 2 from Naja naja (Indian cobra).